A 571-amino-acid polypeptide reads, in one-letter code: uncharacterized protein (571 aa).

The disordered stretch occupies residues M1 to N25. In terms of domain architecture, FAD-binding FR-type spans F135 to T389. The segment at N447–T479 is disordered.

It belongs to the flavoprotein pyridine nucleotide cytochrome reductase family. Requires FAD as cofactor.

This is an uncharacterized protein from Schizosaccharomyces pombe (strain 972 / ATCC 24843) (Fission yeast).